A 1197-amino-acid polypeptide reads, in one-letter code: MTSSSSWVKTDGETPQDQVFINFRGVELRKNFVSHLEKGLKRKGINAFIDTDEEMGQELSVLLERIEGSRIALAIFSPRYTESKWCLKELAKMKERTEQKELVVIPIFYKVQPVTVKELKGDFGDKFRELVKSTDKKTKKEWKEALQYVPFLTGIVLDEKSDEDEVINIIIRKVKEILNRRSEGPPSKCSALPPQRHQKRHETFWGIELRIKQLEEKLRFGSDETTRTIGVVGMPGIGKTTLATMLYEKWNDRFLRHVLIRDIHEASEEDGLNYLATKFLQGLLKVENANIESVQAAHEAYKDQLLETKVLVILDNVSNKDQVDALLGERNWIKKGSKILITTSDKSLMIQSLVNDTYEVPPLSDKDAIKHFIRYAFDGNEGAAPGPGQGNFPKLSKDFVHYTKGNPLALQMLGKELLGKDESHWGLKLNALDQHHNSPPGQSICKMLQRVWEGSYKALSQKEKDALLDIACFRSQDENYVASLLDSDGPSNILEDLVNKFMINIYAGKVDMHDTLYMLSKELGREATATDRKGRHRLWHHHTIIAVLDKNKGGSNIRSIFLDLSDITRKWCFYRHAFAMMRDLRYLKIYSTHCPQECESDIKLNFPEGLLLPLNEVRYLHWLKFPLKEVPQDFNPGNLVDLKLPYSEIERVWEDNKDAPKLKWVNLNHSKKLNTLAGLGKAQNLQELNLEGCTALKEMHVDMENMKFLVFLNLRGCTSLKSLPEIQLISLKTLILSGCSKFKTFQVISDKLEALYLDGTAIKELPCDIGRLQRLVMLNMKGCKKLKRLPDSLGQLKALEELILSGCSKLNEFPETWGNMSRLEILLLDETAIKDMPKILSVRRLCLNKNEKISRLPDLLNKFSQLQWLHLKYCKNLTHVPQLPPNLQYLNVHGCSSLKTVAKPLVCSIPMKHVNSSFIFTNCNELEQAAKEEIVVYAERKCHLLASALKRCDESCVPEILFCTSFPGCEMPSWFSHDAIGSMVEFELPPHWNHNRLSGIALCVVVSFKNCKSHANLIVKFSCEQNNGEGSSSSITWKVGSLIEQDNQEETVESDHVFIGYTNCLDFIKLVKGQGGPKCAPTKASLEFSVRTGTGGEATLEVLKSGFSFVFEPEENRVPSPRNDDVKGKVKINKTPSANGCFKDQAKGNESPKGQWQTYIENSSTNIPSEAHSSQKTGFNGFNGMYSVCVLYEMYSH.

The 164-residue stretch at 15–178 folds into the TIR domain; the sequence is PQDQVFINFR…IIIRKVKEIL (164 aa). The active site involves glutamate 89. In terms of domain architecture, NB-ARC spans 210–480; it reads RIKQLEEKLR…ACFRSQDENY (271 aa). LRR repeat units follow at residues 614 to 636, 638 to 659, 694 to 716, 728 to 749, 750 to 774, 776 to 796, 797 to 819, 820 to 843, 845 to 862, and 863 to 889; these read LNEV…DFNP, NLVD…NKDA, TALK…NLRG, LISL…QVIS, DKLE…RLQR, VMLN…LGQL, KALE…TWGN, MSRL…LSVR, LCLN…LLNK, and FSQL…NLQY.

The catalysed reaction is NAD(+) + H2O = ADP-D-ribose + nicotinamide + H(+). In terms of biological role, TIR-NB-LRR receptor-like protein that functions in photomorphogenic development. May function downstream of phytochrome B (phyB) signaling. The protein is Disease resistance-like protein CSA1 of Arabidopsis thaliana (Mouse-ear cress).